A 302-amino-acid chain; its full sequence is Ribosomal RNA small subunit methyltransferase H (302 aa).

Residues Ala-34–His-36, Asp-53, Phe-80, Asp-101, and Gln-108 contribute to the S-adenosyl-L-methionine site. A disordered region spans residues Leu-283–Arg-302. Residues Lys-290–Arg-302 show a composition bias toward basic residues.

The protein belongs to the methyltransferase superfamily. RsmH family.

Its subcellular location is the cytoplasm. It catalyses the reaction cytidine(1402) in 16S rRNA + S-adenosyl-L-methionine = N(4)-methylcytidine(1402) in 16S rRNA + S-adenosyl-L-homocysteine + H(+). Its function is as follows. Specifically methylates the N4 position of cytidine in position 1402 (C1402) of 16S rRNA. The sequence is that of Ribosomal RNA small subunit methyltransferase H from Mycoplasma mobile (strain ATCC 43663 / 163K / NCTC 11711) (Mesomycoplasma mobile).